Reading from the N-terminus, the 535-residue chain is Putative transcription activator BRLF1 homolog (535 aa).

The tract at residues 384-426 is disordered; sequence KTNFPLKRKRQSRNIDPNTPRRPRGRPKGSKTKKRPTCSPALF. The span at 404-419 shows a compositional bias: basic residues; sequence RRPRGRPKGSKTKKRP.

It belongs to the herpesviridae TAF50 family.

In terms of biological role, transcription activation. Regulates the delayed-early 110 kDa promoter. The polypeptide is Putative transcription activator BRLF1 homolog (50) (Saimiriine herpesvirus 2 (strain 11) (SaHV-2)).